A 444-amino-acid chain; its full sequence is Docking protein 3 (444 aa).

Residues 7-123 (PVKDGLLYQQ…WMDPICQLAF (117 aa)) enclose the PH domain. Positions 47–66 (DVRDGGLGPGGDRPAGPGRR) are disordered. Ser138 bears the Phosphoserine mark. In terms of domain architecture, IRS-type PTB spans 157–261 (EVAEFPVVVQ…ARQRERLPEL (105 aa)). Phosphoserine is present on residues Ser274, Ser308, and Ser314. Tyr325 is subject to Phosphotyrosine. The tract at residues 354–390 (GLSNGGPEAQEGPPGGRSPLGSPIYHNSEELSWPGSA) is disordered. Low complexity predominate over residues 358-376 (GGPEAQEGPPGGRSPLGSP). Ser371 bears the Phosphoserine mark.

This sequence belongs to the DOK family. Type A subfamily. On tyrosine phosphorylation, interacts with CSK and INPP5D/SHIP1 via their SH2 domains. Binds ABL1 through the PTB domain and in a kinase-dependent manner. Does not interact with RasGAP. In terms of processing, constitutively tyrosine-phosphorylated. On IL2 stimulation, phosphorylated on C-terminal tyrosine residues possibly by Src kinases. Can also be phosphorylated by ABL1 kinase.

It localises to the cytoplasm. The protein resides in the cell membrane. In terms of biological role, DOK proteins are enzymatically inert adaptor or scaffolding proteins. They provide a docking platform for the assembly of multimolecular signaling complexes. DOK3 is a negative regulator of JNK signaling in B-cells through interaction with INPP5D/SHIP1. May modulate ABL1 function. The chain is Docking protein 3 (Dok3) from Rattus norvegicus (Rat).